The following is a 573-amino-acid chain: MNQTRVFLIFAWLMVAALLWMEWGKDKAPANAPTPIASQAVPAARDPDAAAPAANVPSAQAIPQAGSPAAVPATSTTTATPATTGAAPAITLTSDVLRLKLDGRSVLDAELLQFPQTKDGTEPVKLLTEDAAHPYNATSGWASERSPVPGVGGFRAEQPGTTFELAKGQNTLVVPFVWNGPNGVSIRRIFTLQRGSYAISIKDEVINKSDAAWNGYVFRKLSRVPTILSRGMTNPDSFSFNGATWYSPQEGYERRAFKDYMDDGGLNRQITGGWVALLQHHFFTAWIPQKDQASLYVLAQDGPRDVAELRGPAFTVAPGQSASTEARLWVGPKLVSLLAKEDVKGLDRVVDYSRFSIMAIIGQGLFWVLSHLHSFLHNWGWAIIGLVVLLRLALYPLSAAQYKSGAKMRRFQPRLAQLKERYGDDRQKYQQATMELFKKEKINPMGGCLPLLIQMPIFFALYWVLVESVELRQAPWLGWIQDLTARDPYFILPVLNIAIMWATQKLTPTPGMDPMQAKMMQFMPLVFGVMMAFMPAGLVLYWVVNGGLGLLIQWWMIRQHGEKPSKIIQANAK.

Residues 6–26 (VFLIFAWLMVAALLWMEWGKD) form a helical membrane-spanning segment. Positions 63–82 (PQAGSPAAVPATSTTTATPA) are disordered. The next 5 membrane-spanning stretches (helical) occupy residues 355-375 (FSIM…LHSF), 379-399 (WGWA…PLSA), 446-466 (GGCL…WVLV), 488-508 (PYFI…KLTP), and 524-544 (PLVF…YWVV).

Belongs to the OXA1/ALB3/YidC family. Type 1 subfamily. Interacts with the Sec translocase complex via SecD. Specifically interacts with transmembrane segments of nascent integral membrane proteins during membrane integration.

It localises to the cell inner membrane. Required for the insertion and/or proper folding and/or complex formation of integral membrane proteins into the membrane. Involved in integration of membrane proteins that insert both dependently and independently of the Sec translocase complex, as well as at least some lipoproteins. Aids folding of multispanning membrane proteins. In Xanthomonas campestris pv. campestris (strain 8004), this protein is Membrane protein insertase YidC.